The primary structure comprises 212 residues: 3,4-dihydroxy-2-butanone 4-phosphate synthase (212 aa).

D-ribulose 5-phosphate-binding positions include 37-38, aspartate 42, 150-154, and glutamate 174; these read RE and RRGHT. Glutamate 38 contacts Mg(2+). Histidine 153 serves as a coordination point for Mg(2+).

The protein belongs to the DHBP synthase family. Homodimer. It depends on Mg(2+) as a cofactor. The cofactor is Mn(2+).

The catalysed reaction is D-ribulose 5-phosphate = (2S)-2-hydroxy-3-oxobutyl phosphate + formate + H(+). The protein operates within cofactor biosynthesis; riboflavin biosynthesis; 2-hydroxy-3-oxobutyl phosphate from D-ribulose 5-phosphate: step 1/1. Catalyzes the conversion of D-ribulose 5-phosphate to formate and 3,4-dihydroxy-2-butanone 4-phosphate. The chain is 3,4-dihydroxy-2-butanone 4-phosphate synthase from Histophilus somni (strain 129Pt) (Haemophilus somnus).